A 273-amino-acid polypeptide reads, in one-letter code: Nitrogenase iron protein 2 (273 aa).

Position 8-15 (8-15 (GKGGIGKS)) interacts with ATP. Position 95 (cysteine 95) interacts with [4Fe-4S] cluster. At arginine 98 the chain carries ADP-ribosylarginine; by dinitrogenase reductase ADP-ribosyltransferase. Cysteine 130 provides a ligand contact to [4Fe-4S] cluster.

Belongs to the NifH/BchL/ChlL family. In terms of assembly, homodimer. The cofactor is [4Fe-4S] cluster. In terms of processing, the reversible ADP-ribosylation of Arg-98 inactivates the nitrogenase reductase and regulates nitrogenase activity.

The catalysed reaction is N2 + 8 reduced [2Fe-2S]-[ferredoxin] + 16 ATP + 16 H2O = H2 + 8 oxidized [2Fe-2S]-[ferredoxin] + 2 NH4(+) + 16 ADP + 16 phosphate + 6 H(+). The key enzymatic reactions in nitrogen fixation are catalyzed by the nitrogenase complex, which has 2 components: the iron protein and the molybdenum-iron protein. The chain is Nitrogenase iron protein 2 (nifH2) from Methanosarcina barkeri.